Here is a 305-residue protein sequence, read N- to C-terminus: Olfactory receptor 4F17 (305 aa).

At 1–18 the chain is on the extracellular side; sequence MVTEFIFLGLSDSQGLQT. A helical membrane pass occupies residues 19–42; the sequence is FLFMLFFVFYGGIVFGNLLIVITV. Residues 43–50 lie on the Cytoplasmic side of the membrane; it reads VSDSHLHS. The helical transmembrane segment at 51 to 72 threads the bilayer; that stretch reads PMYFLLANLSLIDLSLSSVTAP. Residues 73 to 93 lie on the Extracellular side of the membrane; the sequence is KMITDFFSQRKVISFKGCLVQ. A disulfide bond links Cys-90 and Cys-182. The chain crosses the membrane as a helical span at residues 94–113; the sequence is IFLLHFFGGSEMVILIAMGF. Over 114–132 the chain is Cytoplasmic; that stretch reads DRYIAICKPLHYTTIMCGN. The chain crosses the membrane as a helical span at residues 133 to 151; that stretch reads ACVGIMAVAWGIGFLHSVS. Topologically, residues 152 to 188 are extracellular; sequence QLAFAVHLPFCGPNEVDSFYCDLPRVIKLACTDTYRL. The chain crosses the membrane as a helical span at residues 189 to 212; it reads DIMVIANSGVLTVCSFVLLIISYT. The Cytoplasmic segment spans residues 213–228; sequence IILMTIQHRPLDKSSK. Residues 229–251 traverse the membrane as a helical segment; sequence ALSTLTAHITVVLLFFGPCVFIY. The Extracellular portion of the chain corresponds to 252–262; sequence AWPFPIKSLDK. A helical transmembrane segment spans residues 263–282; sequence FLAVFYSVITPLLNPIIYTL. Over 283–305 the chain is Cytoplasmic; it reads RNKDMKTAIRQLRKWDAHSSVKF.

It belongs to the G-protein coupled receptor 1 family.

It is found in the cell membrane. Its function is as follows. Odorant receptor. The protein is Olfactory receptor 4F17 (OR4F17) of Homo sapiens (Human).